Here is a 151-residue protein sequence, read N- to C-terminus: MESSSSTFLTTTSLDKKKPSPVSRKSPKQKKKTTSTNKPIKVRYISNPMRVQTCASKFRELVQELTGQDAVDLQPEPIYSPSSDDHNLSPPAENLAPRVLHQEPFGERDSDCYEPLNAEDMFLPDQMSAGFSGFFSNGFYNVNDFGSIDSM.

Positions 1 to 13 (MESSSSTFLTTTS) are enriched in low complexity. Disordered stretches follow at residues 1–41 (MESS…KPIK) and 66–93 (TGQD…PPAE). The N-terminal 54 residues, 1-54 (MESSSSTFLTTTSLDKKKPSPVSRKSPKQKKKTTSTNKPIKVRYISNPMRVQTC), are a transit peptide targeting the chloroplast. Residues 16-32 (KKKPSPVSRKSPKQKKK) carry the Bipartite nuclear localization signal motif. The VQ motif lies at 58–67 (FRELVQELTG).

In terms of assembly, interacts with the sigma factor SIGA in chloroplast. Interacts with WRKY25 and WRKY33 in the nucleus. As to expression, expressed in leaves and roots, but not in flowers.

Its subcellular location is the plastid. The protein localises to the chloroplast. It is found in the nucleus. Its function is as follows. Contributes to plant defense. May regulate chloroplast metabolism upon infection with pathogens such as Pseudomonas syringae. Functions as activator of WRKY33 in plant defense against necrotrophic pathogens by stimulating the DNA-binding activity of WRKY33. This chain is Sigma factor binding protein 1, chloroplastic (SIB1), found in Arabidopsis thaliana (Mouse-ear cress).